Consider the following 354-residue polypeptide: COP9 signalosome complex subunit 5 (354 aa).

Residues 56 to 193 form the MPN domain; that stretch reads VLVSSIALVK…IGAFRTYPKD (138 aa). The Zn(2+) site is built by His139, His141, and Asp152. The short motif at 139-152 is the JAMM motif element; it reads HSHPGYGCWLSGID. The tract at residues 193–212 is disordered; the sequence is DYKPPKKATKQNQDQSVPLS.

The protein belongs to the peptidase M67A family. CSN5 subfamily. Component of the COP9 signalosome (CSN) complex.

Its subcellular location is the cytoplasm. It is found in the nucleus. Its function is as follows. Catalytic Component of the COP9 signalosome (CSN) complex that acts as an regulator of the ubiquitin (Ubl) conjugation pathway by mediating the deneddylation of the cullin subunit of SCF-type E3 ubiquitin-protein ligase complexes. This Yarrowia lipolytica (strain CLIB 122 / E 150) (Yeast) protein is COP9 signalosome complex subunit 5 (RRI1).